The primary structure comprises 424 residues: MEKFRVHGPFTLSGTVDISGAKNAALPILFAAVLATEPVTLTNVPDLKDVDTTFKILRKLGVVVERDESGAVQIDASKIDHYVAPYELVKTMRASIWALAPLVARFHEGQVSLPGGCTIGARPVDMHISGLEKMGALIELDEGYVKATSNGRLHGARIYMDKVSVGATLSVMMAATLAEGTTTIENAAREPEIVDTALFLNAMGAKISGAGTDTITIEGVERLTGCQHRIVADRIETGTFLVAAAVSGGKITCRGTKADTLEAVIEKLREAGMEVTVTEDTITLDSKGQRPKAVNIRTMPHPGFPTDMQAQFTLLNVVAEGTSRITETIFENRFMHIPELNRMGAKGEIEGNTAICHGVEKLKSAEVMATDLRASISLVLAGCIASGETIVDRIYHIDRGYEHIEDKLRGIGAKIERFSTKFEE.

22–23 (KN) is a binding site for phosphoenolpyruvate. Arg-93 provides a ligand contact to UDP-N-acetyl-alpha-D-glucosamine. Cys-117 serves as the catalytic Proton donor. Cys-117 is subject to 2-(S-cysteinyl)pyruvic acid O-phosphothioketal. UDP-N-acetyl-alpha-D-glucosamine-binding positions include 162–165 (KVSV), Asp-307, and Ile-329.

This sequence belongs to the EPSP synthase family. MurA subfamily.

It is found in the cytoplasm. It carries out the reaction phosphoenolpyruvate + UDP-N-acetyl-alpha-D-glucosamine = UDP-N-acetyl-3-O-(1-carboxyvinyl)-alpha-D-glucosamine + phosphate. It functions in the pathway cell wall biogenesis; peptidoglycan biosynthesis. In terms of biological role, cell wall formation. Adds enolpyruvyl to UDP-N-acetylglucosamine. This is UDP-N-acetylglucosamine 1-carboxyvinyltransferase from Actinobacillus pleuropneumoniae serotype 5b (strain L20).